The primary structure comprises 549 residues: Nectin-3 (549 aa).

The N-terminal stretch at 1-57 (MARTLRPSPLCPGGGKAQLSSASLLGAGLLLQPPTPPPLLLLLFPLLLFSRLCGALA) is a signal peptide. The Extracellular portion of the chain corresponds to 58 to 404 (GPIIVEPHVT…ATIKDDTIAT (347 aa)). Residues 59–165 (PIIVEPHVTA…GNAQSSTTVT (107 aa)) enclose the Ig-like V-type domain. N-linked (GlcNAc...) asparagine glycosylation is found at Asn-73, Asn-83, Asn-125, Asn-186, Asn-222, and Asn-331. The cysteines at positions 78 and 148 are disulfide-linked. 2 consecutive Ig-like C2-type domains span residues 170–258 (PTVS…KDIR) and 269–354 (PEVS…KVIY). Cystine bridges form between Cys-193/Cys-246 and Cys-291/Cys-338. Residues 405–425 (IIASVVGGALFIVLVSVLAGI) form a helical membrane-spanning segment. The Cytoplasmic segment spans residues 426-549 (FCYRRRRTFR…SVISRREWYV (124 aa)).

Belongs to the nectin family. As to quaternary structure, cis- and trans-homodimer. Can form trans-heterodimers with NECTIN1, NECTIN2, PVR, IGSF4B/Necl-1 and with IGSF4. Interaction between NECTIN1 and NECTIN3 on the pre- and postsynaptic sites, respectively, initiates the formation of puncta adherentia junctions between axons and dendrites. Interacts (via Cytoplasmic domain) with AFDN, providing a connection with the actin cytoskeleton. Binds with low affinity to TIGIT. (Microbial infection) Interacts with C.difficile toxin TcdB, suggesting that it may contribute to TcdB toxin entry into cells. It was however shown that NECTIN3/PVRL3 does not act as a major receptor for TcdB. Predominantly expressed in testis and placenta as well as in many cell lines, including epithelial cell lines.

It is found in the cell membrane. It localises to the postsynaptic cell membrane. Its subcellular location is the cell junction. The protein resides in the adherens junction. Its function is as follows. Cell adhesion molecule that promotes cell-cell adhesion through heterophilic trans-interactions with nectins-like or other nectins, such as trans-interaction with NECTIN2 at Sertoli-spermatid junctions. Trans-interaction with PVR induces activation of CDC42 and RAC small G proteins through common signaling molecules such as SRC and RAP1. Induces endocytosis-mediated down-regulation of PVR from the cell surface, resulting in reduction of cell movement and proliferation. Involved in axon guidance by promoting contacts between the commissural axons and the floor plate cells. Also involved in the formation of cell-cell junctions, including adherens junctions and synapses. Promotes formation of checkerboard-like cellular pattern of hair cells and supporting cells in the auditory epithelium via heterophilic interaction with NECTIN1: NECTIN1 is present in the membrane of hair cells and associates with NECTIN3 on supporting cells, thereby mediating heterotypic adhesion between these two cell types. Plays a role in the morphology of the ciliary body. This chain is Nectin-3, found in Homo sapiens (Human).